Reading from the N-terminus, the 755-residue chain is Lysosome membrane protein 2-B (755 aa).

Residues 1–6 (MKHIGR) are Cytoplasmic-facing. A helical membrane pass occupies residues 7 to 27 (IVSFPIGLVLIAVGIIIFVVV). N-linked (GlcNAc...) asparagine glycans are attached at residues asparagine 28, asparagine 76, asparagine 379, asparagine 465, asparagine 497, asparagine 588, asparagine 607, and asparagine 680. Over 28–727 (NRTIKDEFKK…AYKVDSFRYA (700 aa)) the chain is Lumenal. A helical membrane pass occupies residues 728-748 (ITVILIVVGGFLSLISGGLFV). Residues 749 to 755 (LDKIIDL) lie on the Cytoplasmic side of the membrane. A Di-leucine motif motif is present at residues 752–753 (II).

This sequence belongs to the CD36 family. Heavily glycosylated.

The protein localises to the lysosome membrane. May act as a lysosomal receptor. May be involved in macropinocytosis and fluid phase exocytosis. The polypeptide is Lysosome membrane protein 2-B (lmpB) (Dictyostelium discoideum (Social amoeba)).